Reading from the N-terminus, the 127-residue chain is DNA-directed RNA polymerase subunit omega (127 aa).

This sequence belongs to the RNA polymerase subunit omega family. In terms of assembly, the RNAP catalytic core consists of 2 alpha, 1 beta, 1 beta' and 1 omega subunit. When a sigma factor is associated with the core the holoenzyme is formed, which can initiate transcription.

It catalyses the reaction RNA(n) + a ribonucleoside 5'-triphosphate = RNA(n+1) + diphosphate. Its function is as follows. Promotes RNA polymerase assembly. Latches the N- and C-terminal regions of the beta' subunit thereby facilitating its interaction with the beta and alpha subunits. The protein is DNA-directed RNA polymerase subunit omega of Rickettsia africae (strain ESF-5).